A 274-amino-acid polypeptide reads, in one-letter code: Centromere protein K (274 aa).

A disordered region spans residues 1–21 (MSGYQHELPPNISKTSPAPEE). Residues 96 to 159 (KEELEKIAQE…NQLTAFSEKR (64 aa)) adopt a coiled-coil conformation.

This sequence belongs to the CENP-K/MCM22 family.

The protein localises to the nucleus. The protein resides in the chromosome. It is found in the centromere. Its subcellular location is the kinetochore. Functionally, probable component of a centromeric complex involved in assembly of kinetochore proteins, mitotic progression and chromosome segregation. The protein is Centromere protein K (cenpk) of Xenopus laevis (African clawed frog).